A 326-amino-acid polypeptide reads, in one-letter code: Ig gamma-1 chain C region (326 aa).

The interval 1–97 (AETTAPSVYP…ASSTKVDKKI (97 aa)) is CH1. A disulfide bridge connects residues Cys-27 and Cys-82. Residues 98–112 (VPRNCGGDCKPCICT) form a hinge region. The CH2 stretch occupies residues 113 to 219 (GSEVSSVFIF…PIEKTISKPE (107 aa)). Intrachain disulfides connect Cys-140–Cys-200 and Cys-246–Cys-304. Asn-176 carries N-linked (GlcNAc...) asparagine glycosylation. Residues 220 to 326 (GRTQVPHVYT…EKSLSHSPGK (107 aa)) form a CH3 region.

This Rattus norvegicus (Rat) protein is Ig gamma-1 chain C region.